Consider the following 595-residue polypeptide: uncharacterized protein (595 aa).

A run of 9 helical transmembrane segments spans residues V64–F84, I86–L106, F239–S259, F281–P301, V334–I354, M368–I388, F504–M524, Y547–T567, and I571–F591.

The protein to M.jannaschii FlaJ.

It is found in the cell membrane. This is an uncharacterized protein from Methanocaldococcus jannaschii (strain ATCC 43067 / DSM 2661 / JAL-1 / JCM 10045 / NBRC 100440) (Methanococcus jannaschii).